A 503-amino-acid chain; its full sequence is Annexin A11 (503 aa).

2 stretches are compositionally biased toward pro residues: residues Gly-80–Pro-117 and Pro-123–Ser-167. The segment at Gly-80 to Ser-172 is disordered. Annexin repeat units lie at residues Phe-198–Lys-269, Thr-270–Gln-341, Ser-353–Lys-425, and Asn-429–Gly-500. An N6-acetyllysine mark is found at Lys-246 and Lys-253. Lys-477 is subject to N6-acetyllysine.

The protein belongs to the annexin family. As to quaternary structure, interacts with S100A6. Interacts with PDCD6 in a calcium-dependent manner. Interacts with KIF23 during cytokinesis.

The protein resides in the cytoplasm. It is found in the melanosome. Its subcellular location is the nucleus envelope. The protein localises to the nucleus. It localises to the nucleoplasm. The protein resides in the cytoskeleton. It is found in the spindle. Required for midbody formation and completion of the terminal phase of cytokinesis. Binds specifically to calcyclin in a calcium-dependent manner. The sequence is that of Annexin A11 (Anxa11) from Mus musculus (Mouse).